Here is a 154-residue protein sequence, read N- to C-terminus: Endoribonuclease YbeY (154 aa).

3 residues coordinate Zn(2+): H117, H121, and H127.

Belongs to the endoribonuclease YbeY family. It depends on Zn(2+) as a cofactor.

It is found in the cytoplasm. Functionally, single strand-specific metallo-endoribonuclease involved in late-stage 70S ribosome quality control and in maturation of the 3' terminus of the 16S rRNA. In Mycoplasma pneumoniae (strain ATCC 29342 / M129 / Subtype 1) (Mycoplasmoides pneumoniae), this protein is Endoribonuclease YbeY.